Reading from the N-terminus, the 156-residue chain is MRNTTKQEDLIKAFKALLKEEKFSSQGEIVQALQELGFDSINQSKVSRMLTKFGAVRTRNAKMEMVYCLPAELGVPTTSSPLKNLVLDVDHNDAIVVIHTSPGAAQLIARLLDSLGKSEGILGTIAGDDTIFTTPAKGFAVEQLYAAILALFEQEL.

The protein belongs to the ArgR family.

The protein resides in the cytoplasm. It participates in amino-acid biosynthesis; L-arginine biosynthesis [regulation]. Its function is as follows. Regulates arginine biosynthesis genes. This chain is Arginine repressor, found in Edwardsiella ictaluri (strain 93-146).